The chain runs to 218 residues: Probable GTP-binding protein EngB (218 aa).

The EngB-type G domain maps to 31 to 205 (SGIEIAFAGR…EQKVTSWYAQ (175 aa)). GTP-binding positions include 39 to 46 (GRSNAGKS), 66 to 70 (GRTQL), 84 to 87 (DLPG), 151 to 154 (TKAD), and 184 to 186 (FSS). Residues serine 46 and threonine 68 each coordinate Mg(2+).

The protein belongs to the TRAFAC class TrmE-Era-EngA-EngB-Septin-like GTPase superfamily. EngB GTPase family. Requires Mg(2+) as cofactor.

Necessary for normal cell division and for the maintenance of normal septation. The polypeptide is Probable GTP-binding protein EngB (Psychromonas ingrahamii (strain DSM 17664 / CCUG 51855 / 37)).